Reading from the N-terminus, the 108-residue chain is Mitochondrial pyruvate carrier 3 (108 aa).

The next 3 helical transmembrane spans lie at 19–35 (IHFW…IANI), 51–67 (IVIT…STVI), and 74–90 (LFSV…YQLT).

It belongs to the mitochondrial pyruvate carrier (MPC) (TC 2.A.105) family. As to expression, abundant in leaf and particularly in the guard cells.

It localises to the mitochondrion. The protein resides in the mitochondrion inner membrane. In terms of biological role, mediates the uptake of pyruvate into mitochondria. Negatively regulates ABA-induced guard cell signaling and mediates drought stress responses. The polypeptide is Mitochondrial pyruvate carrier 3 (Arabidopsis thaliana (Mouse-ear cress)).